Reading from the N-terminus, the 427-residue chain is Dihydroorotase (427 aa).

Residues H57 and H59 each coordinate Zn(2+). Residues 59–61 (HLR) and N91 contribute to the substrate site. D149, H176, and H229 together coordinate Zn(2+). N275 serves as a coordination point for substrate. D302 is a Zn(2+) binding site. D302 is an active-site residue. Substrate contacts are provided by residues H306 and 320–321 (FG).

It belongs to the metallo-dependent hydrolases superfamily. DHOase family. Class I DHOase subfamily. Zn(2+) is required as a cofactor.

The catalysed reaction is (S)-dihydroorotate + H2O = N-carbamoyl-L-aspartate + H(+). Its pathway is pyrimidine metabolism; UMP biosynthesis via de novo pathway; (S)-dihydroorotate from bicarbonate: step 3/3. Catalyzes the reversible cyclization of carbamoyl aspartate to dihydroorotate. The chain is Dihydroorotase from Shouchella clausii (strain KSM-K16) (Alkalihalobacillus clausii).